Reading from the N-terminus, the 509-residue chain is uncharacterized protein (509 aa).

The N-terminal stretch at 1–32 (MMLPKRNIIHFLRKRAIFIVAAFIALLTVDYS) is a signal peptide.

It is found in the endoplasmic reticulum. This is an uncharacterized protein from Schizosaccharomyces pombe (strain 972 / ATCC 24843) (Fission yeast).